Reading from the N-terminus, the 291-residue chain is N-acetylmannosamine kinase (291 aa).

ATP is bound by residues 5-12 (AIDIGGTK) and 132-139 (GVGGGVVS). Zn(2+)-binding residues include His-156, Cys-166, Cys-168, and Cys-173.

Belongs to the ROK (NagC/XylR) family. NanK subfamily. As to quaternary structure, homodimer.

The enzyme catalyses an N-acyl-D-mannosamine + ATP = an N-acyl-D-mannosamine 6-phosphate + ADP + H(+). It participates in amino-sugar metabolism; N-acetylneuraminate degradation; D-fructose 6-phosphate from N-acetylneuraminate: step 2/5. Functionally, catalyzes the phosphorylation of N-acetylmannosamine (ManNAc) to ManNAc-6-P. The sequence is that of N-acetylmannosamine kinase from Escherichia coli (strain 55989 / EAEC).